A 500-amino-acid chain; its full sequence is Putative DNA recombinase (500 aa).

Positions 1-144 (MIAIYVRVST…SGRLQKMKKG (144 aa)) constitute a Resolvase/invertase-type recombinase catalytic domain. Residue Ser9 is the O-(5'-phospho-DNA)-serine intermediate of the active site. The recombinase DNA-binding region spans 152-288 (LYGYKFVKEK…QELLGQSKRK (137 aa)). Residues 372–448 (KEAEQSNHLS…IQSKMKVLDD (77 aa)) are a coiled coil.

The protein in the N-terminal section; belongs to the site-specific recombinase resolvase family.

Putative site-specific recombinase having a very important role in sporulation. It probably plays a role in the recombination of SpoIIIC and SpoIVCB to form sigma K factor. The sequence is that of Putative DNA recombinase (cisA) from Bacillus subtilis (strain 168).